We begin with the raw amino-acid sequence, 392 residues long: MADNLNLVSVLGVLLVLTIFHNPIIVYAGEGVPNVALFTFGDSYYDAGNKVFLSQRKDLPQTYWPYGKSRDYPNGKFSDGHIVPDFIADFISIPNGVLPPVLKPGVDISRGVSFAVADASILGAPVESMTLNQQVVKFKNMKSNWNDSYIEKSLFMIYIGTEDYLNFTKANPNADASAQQAFVTNVINRLKNDIKLLYSLGASKFVVQLLAPLGCLPIVRQEYKTGNECYELLNDLAKQHNGKIGPMLNEFAKISTSPYGFQFTVFDFYNAVLRRIATGRSLNYRFFVTNTSCCGVGTHNAYGCGKGNVHSKLCEYQRSYFFFDGRHNTEKAQEEMAHLLYGADPDVVQPMTVRELIVYPTGETMREYWEPNNLAIRRRPSRDFYLGLAAYY.

Residues 1–28 (MADNLNLVSVLGVLLVLTIFHNPIIVYA) form the signal peptide. Catalysis depends on Ser-43, which acts as the Nucleophile. Residues Asn-146, Asn-166, and Asn-290 are each glycosylated (N-linked (GlcNAc...) asparagine). Active-site residues include Asp-324 and His-327.

Belongs to the 'GDSL' lipolytic enzyme family.

It is found in the secreted. In terms of biological role, represses or inhibits nitriles production from methionine-derived and from indol-3-ylmethyl glucosinolates. Favors isothiocyanate production. The sequence is that of GDSL esterase/lipase ESM1 (ESM1) from Arabidopsis thaliana (Mouse-ear cress).